The sequence spans 371 residues: Flagellar P-ring protein (371 aa).

The N-terminal stretch at 1–25 is a signal peptide; that stretch reads MTMRVCKWLLTFALLFAATLTPAHS.

It belongs to the FlgI family. In terms of assembly, the basal body constitutes a major portion of the flagellar organelle and consists of four rings (L,P,S, and M) mounted on a central rod.

It is found in the periplasm. The protein localises to the bacterial flagellum basal body. Its function is as follows. Assembles around the rod to form the L-ring and probably protects the motor/basal body from shearing forces during rotation. This Sinorhizobium fredii (strain NBRC 101917 / NGR234) protein is Flagellar P-ring protein.